The primary structure comprises 130 residues: Small ribosomal subunit protein uS8 (130 aa).

It belongs to the universal ribosomal protein uS8 family. In terms of assembly, part of the 30S ribosomal subunit. Contacts proteins S5 and S12.

Functionally, one of the primary rRNA binding proteins, it binds directly to 16S rRNA central domain where it helps coordinate assembly of the platform of the 30S subunit. This chain is Small ribosomal subunit protein uS8, found in Enterobacter sp. (strain 638).